The sequence spans 418 residues: Beta-arrestin-1 (418 aa).

The interaction with SRC stretch occupies residues 1-163 (MGDKGTRVFK…LEEKIHKRNS (163 aa)). The interaction with CHRM2 stretch occupies residues 45 to 86 (PEYLKERRVYVTLTCAFRYGREDLDVLGLTFRKDLFVANVQS). Tyr-47 is subject to Phosphotyrosine. The 1D-myo-inositol hexakisphosphate site is built by Lys-250, Met-255, Lys-324, and Lys-326. The tract at residues 318–418 (IVSYKVKVKL…GTGSPQLNNR (101 aa)) is interaction with TRAF6. A disordered region spans residues 353–375 (HPKPKEEPPHREVPENETPVDTN). Positions 355 to 366 (KPKEEPPHREVP) are enriched in basic and acidic residues. The short motif at 385-395 (DIVFEDFARQR) is the [DE]-X(1,2)-F-X-X-[FL]-X-X-X-R motif element. The interval 397–418 (KGMKDDKEEEEDGTGSPQLNNR) is disordered. Position 412 is a phosphoserine; by GRK5 (Ser-412).

Belongs to the arrestin family. Monomer. Homodimer. Homooligomer; the self-association is mediated by InsP6-binding. Heterooligomer with ARRB2; the association is mediated by InsP6-binding. Interacts with GPR143. Interacts with ADRB2 (phosphorylated). Interacts with CHRM2 (phosphorylated). Interacts with LHCGR. Interacts with CYTH2 and CASR. Interacts with AP2B1 (dephosphorylated at 'Tyr-737'); phosphorylation of AP2B1 at 'Tyr-737' disrupts the interaction. Interacts (dephosphorylated at Ser-412) with CLTC. Interacts with CCR2 and GRK2. Interacts with CRR5. Interacts with PTAFR (phosphorylated on serine residues). Interacts with CLTC and MAP2K3. Interacts with CREB1. Interacts with TRAF6. Interacts with IGF1R and MDM2. Interacts with C5AR1. Interacts with PDE4D. Interacts with SRC (via the SH3 domain and the protein kinase domain); the interaction is independent of the phosphorylation state of SRC C-terminus. Interacts with TACR1. Interacts with RAF1. Interacts with CHUK, IKBKB and MAP3K14. Interacts with DVL1; the interaction is enhanced by phosphorylation of DVL1. Interacts with DVL2; the interaction is enhanced by phosphorylation of DVL2. Interacts with IGF1R. Associates with MAP kinase p38. Part of a MAPK signaling complex consisting of TACR1, ARRB1, SRC, MAPK1 (activated) and MAPK3 (activated). Part of a MAPK signaling complex consisting of F2RL1, ARRB1, RAF1, MAPK1 (activated) and MAPK3 (activated). Interacts with MAP2K4/MKK4. Interacts with HCK and CXCR1 (phosphorylated). Interacts with ACKR3 and ACKR4. Interacts with ARRDC1; the interaction is direct. Interacts with GPR61, GPR62 and GPR135. Post-translationally, constitutively phosphorylated at Ser-412 in the cytoplasm. At the plasma membrane, is rapidly dephosphorylated, a process that is required for clathrin binding and ADRB2 endocytosis but not for ADRB2 binding and desensitization. Once internalized, is rephosphorylated. The ubiquitination status appears to regulate the formation and trafficking of beta-arrestin-GPCR complexes and signaling. Ubiquitination appears to occur GPCR-specific. Ubiquitinated by MDM2; the ubiquitination is required for rapid internalization of ADRB2. Deubiquitinated by USP33; the deubiquitination leads to a dissociation of the beta-arrestin-GPCR complex. Stimulation of a class A GPCR, such as ADRB2, induces transient ubiquitination and subsequently promotes association with USP33.

The protein resides in the cytoplasm. It localises to the nucleus. It is found in the cell membrane. The protein localises to the membrane. Its subcellular location is the clathrin-coated pit. The protein resides in the cell projection. It localises to the pseudopodium. It is found in the cytoplasmic vesicle. Its function is as follows. Functions in regulating agonist-mediated G-protein coupled receptor (GPCR) signaling by mediating both receptor desensitization and resensitization processes. During homologous desensitization, beta-arrestins bind to the GPRK-phosphorylated receptor and sterically preclude its coupling to the cognate G-protein; the binding appears to require additional receptor determinants exposed only in the active receptor conformation. The beta-arrestins target many receptors for internalization by acting as endocytic adapters (CLASPs, clathrin-associated sorting proteins) and recruiting the GPRCs to the adapter protein 2 complex 2 (AP-2) in clathrin-coated pits (CCPs). However, the extent of beta-arrestin involvement appears to vary significantly depending on the receptor, agonist and cell type. Internalized arrestin-receptor complexes traffic to intracellular endosomes, where they remain uncoupled from G-proteins. Two different modes of arrestin-mediated internalization occur. Class A receptors, like ADRB2, OPRM1, ENDRA, D1AR and ADRA1B dissociate from beta-arrestin at or near the plasma membrane and undergo rapid recycling. Class B receptors, like AVPR2, AGTR1, NTSR1, TRHR and TACR1 internalize as a complex with arrestin and traffic with it to endosomal vesicles, presumably as desensitized receptors, for extended periods of time. Receptor resensitization then requires that receptor-bound arrestin is removed so that the receptor can be dephosphorylated and returned to the plasma membrane. Involved in internalization of P2RY4 and UTP-stimulated internalization of P2RY2. Involved in phosphorylation-dependent internalization of OPRD1 ands subsequent recycling. Involved in the degradation of cAMP by recruiting cAMP phosphodiesterases to ligand-activated receptors. Beta-arrestins function as multivalent adapter proteins that can switch the GPCR from a G-protein signaling mode that transmits short-lived signals from the plasma membrane via small molecule second messengers and ion channels to a beta-arrestin signaling mode that transmits a distinct set of signals that are initiated as the receptor internalizes and transits the intracellular compartment. Acts as a signaling scaffold for MAPK pathways such as MAPK1/3 (ERK1/2). ERK1/2 activated by the beta-arrestin scaffold is largely excluded from the nucleus and confined to cytoplasmic locations such as endocytic vesicles, also called beta-arrestin signalosomes. Recruits c-Src/SRC to ADRB2 resulting in ERK activation. GPCRs for which the beta-arrestin-mediated signaling relies on both ARRB1 and ARRB2 (codependent regulation) include ADRB2, F2RL1 and PTH1R. For some GPCRs the beta-arrestin-mediated signaling relies on either ARRB1 or ARRB2 and is inhibited by the other respective beta-arrestin form (reciprocal regulation). Inhibits ERK1/2 signaling in AGTR1- and AVPR2-mediated activation (reciprocal regulation). Is required for SP-stimulated endocytosis of NK1R and recruits c-Src/SRC to internalized NK1R resulting in ERK1/2 activation, which is required for the antiapoptotic effects of SP. Is involved in proteinase-activated F2RL1-mediated ERK activity. Acts as a signaling scaffold for the AKT1 pathway. Is involved in alpha-thrombin-stimulated AKT1 signaling. Is involved in IGF1-stimulated AKT1 signaling leading to increased protection from apoptosis. Involved in activation of the p38 MAPK signaling pathway and in actin bundle formation. Involved in F2RL1-mediated cytoskeletal rearrangement and chemotaxis. Involved in AGTR1-mediated stress fiber formation by acting together with GNAQ to activate RHOA. Appears to function as signaling scaffold involved in regulation of MIP-1-beta-stimulated CCR5-dependent chemotaxis. Involved in attenuation of NF-kappa-B-dependent transcription in response to GPCR or cytokine stimulation by interacting with and stabilizing CHUK. May serve as nuclear messenger for GPCRs. Involved in OPRD1-stimulated transcriptional regulation by translocating to CDKN1B and FOS promoter regions and recruiting EP300 resulting in acetylation of histone H4. Involved in regulation of LEF1 transcriptional activity via interaction with DVL1 and/or DVL2 Also involved in regulation of receptors other than GPCRs. Involved in Toll-like receptor and IL-1 receptor signaling through the interaction with TRAF6 which prevents TRAF6 autoubiquitination and oligomerization required for activation of NF-kappa-B and JUN. Binds phosphoinositides. Binds inositolhexakisphosphate (InsP6). Involved in IL8-mediated granule release in neutrophils. Required for atypical chemokine receptor ACKR2-induced RAC1-LIMK1-PAK1-dependent phosphorylation of cofilin (CFL1) and for the up-regulation of ACKR2 from endosomal compartment to cell membrane, increasing its efficiency in chemokine uptake and degradation. Involved in the internalization of the atypical chemokine receptor ACKR3. Negatively regulates the NOTCH signaling pathway by mediating the ubiquitination and degradation of NOTCH1 by ITCH. Participates in the recruitment of the ubiquitin-protein ligase to the receptor. This chain is Beta-arrestin-1 (ARRB1), found in Homo sapiens (Human).